The sequence spans 272 residues: 2-dehydro-3-deoxyphosphooctonate aldolase (272 aa).

Belongs to the KdsA family.

It is found in the cytoplasm. The catalysed reaction is D-arabinose 5-phosphate + phosphoenolpyruvate + H2O = 3-deoxy-alpha-D-manno-2-octulosonate-8-phosphate + phosphate. It participates in carbohydrate biosynthesis; 3-deoxy-D-manno-octulosonate biosynthesis; 3-deoxy-D-manno-octulosonate from D-ribulose 5-phosphate: step 2/3. The protein operates within bacterial outer membrane biogenesis; lipopolysaccharide biosynthesis. The protein is 2-dehydro-3-deoxyphosphooctonate aldolase of Geobacter metallireducens (strain ATCC 53774 / DSM 7210 / GS-15).